A 111-amino-acid chain; its full sequence is Disintegrin DS-AN (111 aa).

The first 20 residues, 1–20 (MIQVLLVIICLAVFPYQGSC), serve as a signal peptide directing secretion. The propeptide occupies 21-47 (IILESGNVNDYEIVYPKKLIVLPTGAM). Residues 47–111 (MNSPHPCCDP…PDCPRNPYKD (65 aa)) enclose the Disintegrin domain. 4 disulfide bridges follow: Cys53/Cys76, Cys67/Cys73, Cys72/Cys97, and Cys85/Cys104. A Cell attachment site motif is present at residues 89 to 91 (RGD).

Heterodimer; disulfide-linked.

It localises to the secreted. In terms of biological role, inhibits ADP-induced platelet aggregation in human platelet-rich plasma (IC(50) is 8 uM). This chain is Disintegrin DS-AN, found in Atheris nitschei (Great lakes bush viper).